The chain runs to 256 residues: Ciliary microtubule associated protein 1A (256 aa).

STPGR repeat units follow at residues 66–92 (PGPG…IYGR), 181–206 (PGPG…MTAR), and 217–242 (PGPG…FGIR).

Belongs to the CIMAP family.

The protein localises to the cytoplasm. The protein resides in the cytoskeleton. Its subcellular location is the flagellum axoneme. Functionally, outer dense fibers are filamentous structures located on the outside of the axoneme in the midpiece and principal piece of the mammalian sperm tail. May help to maintain the passive elastic structures and elastic recoil of the sperm tail. This is Ciliary microtubule associated protein 1A (cimap1a) from Xenopus tropicalis (Western clawed frog).